Here is a 525-residue protein sequence, read N- to C-terminus: Protein disulfide-isomerase A2 (525 aa).

The first 21 residues, 1–21 (MSCQLLPVLLLLLLRASCPWG), serve as a signal peptide directing secretion. The Thioredoxin 1 domain occupies 27 to 152 (RSPSEEPPEE…IAEWLRRRVG (126 aa)). Residues C71 and C74 each act as nucleophile in the active site. C71 and C74 are disulfide-bonded. N127 and N284 each carry an N-linked (GlcNAc...) asparagine glycan. One can recognise a Thioredoxin 2 domain in the interval 367 to 496 (VLNGQVKPYL…FSKFLDNGGV (130 aa)). Active-site nucleophile residues include C418 and C421. Residues C418 and C421 are joined by a disulfide bond. The disordered stretch occupies residues 498 to 525 (PTEEPLEEPAAPFPEPPANSTMGSKEEL). N516 is a glycosylation site (N-linked (GlcNAc...) asparagine). Residues 516 to 525 (NSTMGSKEEL) show a composition bias toward polar residues. Positions 522–525 (KEEL) match the Prevents secretion from ER motif.

This sequence belongs to the protein disulfide isomerase family. In terms of assembly, monomer; predominantly as monomer under reducing conditions. Homodimer; disulfide-linked. Part of a large chaperone multiprotein complex comprising DNAJB11, HSP90B1, HSPA5, HYOU, PDIA2, PDIA4, PDIA6, PPIB, SDF2L1, UGGT1 and very small amounts of ERP29, but not, or at very low levels, CALR nor CANX. Post-translationally, the disulfide-linked homodimer exhibits an enhanced chaperone activity. In terms of processing, glycosylated.

Its subcellular location is the endoplasmic reticulum lumen. It catalyses the reaction Catalyzes the rearrangement of -S-S- bonds in proteins.. In terms of biological role, acts as an intracellular estrogen-binding protein. May be involved in modulating cellular levels and biological functions of estrogens in the pancreas. May act as a chaperone that inhibits aggregation of misfolded proteins. The sequence is that of Protein disulfide-isomerase A2 (PDIA2) from Pongo abelii (Sumatran orangutan).